Consider the following 156-residue polypeptide: Small ribosomal subunit protein uS7 (156 aa).

This sequence belongs to the universal ribosomal protein uS7 family. As to quaternary structure, part of the 30S ribosomal subunit. Contacts proteins S9 and S11.

Its function is as follows. One of the primary rRNA binding proteins, it binds directly to 16S rRNA where it nucleates assembly of the head domain of the 30S subunit. Is located at the subunit interface close to the decoding center, probably blocks exit of the E-site tRNA. The protein is Small ribosomal subunit protein uS7 of Rhodococcus opacus (strain B4).